Reading from the N-terminus, the 368-residue chain is 1-deoxy-D-xylulose 5-phosphate reductoisomerase (368 aa).

Residues threonine 7, glycine 8, serine 9, isoleucine 10, glycine 31, lysine 32, asparagine 33, and asparagine 113 each coordinate NADPH. Lysine 114 contributes to the 1-deoxy-D-xylulose 5-phosphate binding site. Residue glutamate 115 participates in NADPH binding. Residue aspartate 133 coordinates Mn(2+). Serine 134, glutamate 135, serine 158, and histidine 181 together coordinate 1-deoxy-D-xylulose 5-phosphate. Glutamate 135 is a Mn(2+) binding site. Glycine 187 serves as a coordination point for NADPH. 4 residues coordinate 1-deoxy-D-xylulose 5-phosphate: serine 194, asparagine 199, lysine 200, and glutamate 203. Residue glutamate 203 coordinates Mn(2+).

This sequence belongs to the DXR family. Mg(2+) serves as cofactor. Mn(2+) is required as a cofactor.

The enzyme catalyses 2-C-methyl-D-erythritol 4-phosphate + NADP(+) = 1-deoxy-D-xylulose 5-phosphate + NADPH + H(+). Its pathway is isoprenoid biosynthesis; isopentenyl diphosphate biosynthesis via DXP pathway; isopentenyl diphosphate from 1-deoxy-D-xylulose 5-phosphate: step 1/6. Its function is as follows. Catalyzes the NADPH-dependent rearrangement and reduction of 1-deoxy-D-xylulose-5-phosphate (DXP) to 2-C-methyl-D-erythritol 4-phosphate (MEP). The sequence is that of 1-deoxy-D-xylulose 5-phosphate reductoisomerase from Helicobacter pylori (strain J99 / ATCC 700824) (Campylobacter pylori J99).